We begin with the raw amino-acid sequence, 142 residues long: Large ribosomal subunit protein uL13 (142 aa).

Belongs to the universal ribosomal protein uL13 family. In terms of assembly, part of the 50S ribosomal subunit.

This protein is one of the early assembly proteins of the 50S ribosomal subunit, although it is not seen to bind rRNA by itself. It is important during the early stages of 50S assembly. In Actinobacillus pleuropneumoniae serotype 5b (strain L20), this protein is Large ribosomal subunit protein uL13.